We begin with the raw amino-acid sequence, 275 residues long: Transmembrane protein 106B (275 aa).

The segment at 1–24 (MGKSLSHLPLHSNKEDGYDGVTST) is disordered. Gly2 carries the N-myristoyl glycine lipid modification. Topologically, residues 2–97 (GKSLSHLPLH…QRLRPRRTKL (96 aa)) are cytoplasmic. A Phosphoserine modification is found at Ser34. A helical membrane pass occupies residues 98-118 (YVMASVFVCLLLSGLAVFFLF). Topologically, residues 119–275 (PRSIDVKYIG…EYLNVLQPQQ (157 aa)) are lumenal. N-linked (GlcNAc...) asparagine glycans are attached at residues Asn146, Asn152, Asn165, and Asn184. A disulfide bond links Cys215 and Cys254. The N-linked (GlcNAc...) asparagine glycan is linked to Asn257.

It belongs to the TMEM106 family. In terms of assembly, can form homomers. Interacts (via N-terminus) with MAP6 (via C-terminus). Interacts (via C-terminus) with the vacuolar-type ATPase subunit ATP6AP1. Interacts (via N-terminus) with AP2M1 and CLTC. Interacts with TMEM106C. As to expression, expressed in cortical neurons (at protein level).

It is found in the late endosome membrane. It localises to the lysosome membrane. The protein resides in the cell membrane. Functionally, involved in dendrite morphogenesis and maintenance by regulating lysosomal trafficking. May act as a molecular brake for retrograde transport of late endosomes/lysosomes, possibly via its interaction with MAP6. In neurons, may also play a role in the regulation of lysosomal size and responsiveness to stress. Required for proper lysosomal acidification. In terms of biological role, in neurons, involved in the transport of late endosomes/lysosomes. May be involved in dendrite morphogenesis and maintenance by regulating lysosomal trafficking. May act as a molecular brake for retrograde transport of late endosomes/lysosomes, possibly via its interaction with MAP6. In motoneurons, may mediate the axonal transport of lysosomes and axonal sorting at the initial segment. It remains unclear whether TMEM106B affects the transport of moving lysosomes in the anterograde or retrograde direction in neurites and whether it is particularly important in the sorting of lysosomes in axons or in dendrites. In neurons, may also play a role in the regulation of lysosomal size and responsiveness to stress. Required for proper lysosomal acidification. This Rattus norvegicus (Rat) protein is Transmembrane protein 106B (Tmem106b).